A 226-amino-acid chain; its full sequence is Adenosine 5'-phosphosulfate reductase (226 aa).

[4Fe-4S] cluster contacts are provided by cysteine 112, cysteine 113, cysteine 195, and cysteine 198. Cysteine 221 acts as the Nucleophile; cysteine thiosulfonate intermediate in catalysis.

Belongs to the PAPS reductase family. CysH subfamily. [4Fe-4S] cluster serves as cofactor.

It localises to the cytoplasm. It carries out the reaction [thioredoxin]-disulfide + sulfite + AMP + 2 H(+) = adenosine 5'-phosphosulfate + [thioredoxin]-dithiol. Its pathway is sulfur metabolism; hydrogen sulfide biosynthesis; sulfite from sulfate. In terms of biological role, catalyzes the formation of sulfite from adenosine 5'-phosphosulfate (APS) using thioredoxin as an electron donor. This Bacillus anthracis (strain A0248) protein is Adenosine 5'-phosphosulfate reductase.